A 711-amino-acid polypeptide reads, in one-letter code: DNA ligase (711 aa).

The disordered stretch occupies residues methionine 1–proline 21. Positions alanine 10–proline 21 are enriched in low complexity. Residues aspartate 52 to aspartate 56, serine 101 to leucine 102, and glutamate 146 contribute to the NAD(+) site. Residue lysine 148 is the N6-AMP-lysine intermediate of the active site. 4 residues coordinate NAD(+): arginine 169, glutamate 205, lysine 322, and lysine 346. Zn(2+) contacts are provided by cysteine 440, cysteine 443, cysteine 458, and cysteine 464. The region spanning arginine 623–serine 711 is the BRCT domain.

Belongs to the NAD-dependent DNA ligase family. LigA subfamily. Requires Mg(2+) as cofactor. It depends on Mn(2+) as a cofactor.

The catalysed reaction is NAD(+) + (deoxyribonucleotide)n-3'-hydroxyl + 5'-phospho-(deoxyribonucleotide)m = (deoxyribonucleotide)n+m + AMP + beta-nicotinamide D-nucleotide.. In terms of biological role, DNA ligase that catalyzes the formation of phosphodiester linkages between 5'-phosphoryl and 3'-hydroxyl groups in double-stranded DNA using NAD as a coenzyme and as the energy source for the reaction. It is essential for DNA replication and repair of damaged DNA. This chain is DNA ligase, found in Cupriavidus pinatubonensis (strain JMP 134 / LMG 1197) (Cupriavidus necator (strain JMP 134)).